Here is a 134-residue protein sequence, read N- to C-terminus: Profilin-2 (134 aa).

A disulfide bridge connects residues C13 and C118. The Involved in PIP2 interaction motif lies at 84–100 (AVIRGKKGSGGITIKKT). Position 114 is a phosphothreonine (T114).

This sequence belongs to the profilin family. Occurs in many kinds of cells as a complex with monomeric actin in a 1:1 ratio. In terms of processing, phosphorylated by MAP kinases.

The protein resides in the cytoplasm. The protein localises to the cytoskeleton. Binds to actin and affects the structure of the cytoskeleton. At high concentrations, profilin prevents the polymerization of actin, whereas it enhances it at low concentrations. The polypeptide is Profilin-2 (Olea europaea (Common olive)).